A 466-amino-acid chain; its full sequence is GVGFKAGVKDYKLTYYTPEYQTLDTDILAAFRVTPQPGVPPEEAGAAVAAESSTGTWTTVWTDGLTSLDRYKGRCYHIEPVSGEENQFIAYVAYPLDLFEEGSVTNMFTSIVGNVFGFKALRALRLEDLRIPTSYIKTFQGPPHGIQVERDKLNKYGRPLLGCTIKPKLGLSAKNYGRAVYECLRGGLDFTKDDENVNSQPFMRWRDRFLFCAEALYKAQAETGEIKGHYLNATAGTCEEMIKRAVFARELGVPIVMHDYLTGGFTANTSLAHYCRDNGLLLHIHRAMHAVLDRQKNHGIHFRVLAKALRMSGGDHIHSGTVVGKLEGERDITLGFVDLLRDDFIEKDRSRGIYFTQPWVSLPGVLPVASGGIHVWHMPALTEIFGDDSVLQFGGGTLGHPWGNPPGAAANRVALEACVQARNQGQDLAREGNEIIRRAAKWSPELSSACEVWKEIKFIFEAMDTL.

Position 5 is an N6,N6,N6-trimethyllysine (K5). Substrate contacts are provided by N114 and T164. K166 (proton acceptor) is an active-site residue. K168 lines the substrate pocket. Mg(2+) contacts are provided by K192, D194, and E195. Residue K192 is modified to N6-carboxylysine. Residue H285 is the Proton acceptor of the active site. R286, H318, and S370 together coordinate substrate.

The protein belongs to the RuBisCO large chain family. Type I subfamily. In terms of assembly, heterohexadecamer of 8 large chains and 8 small chains; disulfide-linked. The disulfide link is formed within the large subunit homodimers. The cofactor is Mg(2+). The disulfide bond which can form in the large chain dimeric partners within the hexadecamer appears to be associated with oxidative stress and protein turnover.

The protein resides in the plastid. Its subcellular location is the chloroplast. The enzyme catalyses 2 (2R)-3-phosphoglycerate + 2 H(+) = D-ribulose 1,5-bisphosphate + CO2 + H2O. It catalyses the reaction D-ribulose 1,5-bisphosphate + O2 = 2-phosphoglycolate + (2R)-3-phosphoglycerate + 2 H(+). RuBisCO catalyzes two reactions: the carboxylation of D-ribulose 1,5-bisphosphate, the primary event in carbon dioxide fixation, as well as the oxidative fragmentation of the pentose substrate in the photorespiration process. Both reactions occur simultaneously and in competition at the same active site. This is Ribulose bisphosphate carboxylase large chain from Drosera filiformis (Thread-leaved sundew).